We begin with the raw amino-acid sequence, 81 residues long: MNRPVHNEHRRKRFAKKCPFVSAGWKTIDYKDVTTLKRFITERGKILPRRITGVSSRFQALLAQAVKRARHVGLLPFVGED.

The protein belongs to the bacterial ribosomal protein bS18 family. Part of the 30S ribosomal subunit. Forms a tight heterodimer with protein bS6.

Binds as a heterodimer with protein bS6 to the central domain of the 16S rRNA, where it helps stabilize the platform of the 30S subunit. This Chlamydia trachomatis serovar L2 (strain ATCC VR-902B / DSM 19102 / 434/Bu) protein is Small ribosomal subunit protein bS18.